The chain runs to 299 residues: Triplex capsid protein 1 (299 aa).

This sequence belongs to the herpesviridae TRX1 protein family. As to quaternary structure, interacts with TRX2, MCP and capsid vertex component 2/CVC2.

It is found in the virion. It localises to the host nucleus. In terms of biological role, structural component of the T=16 icosahedral capsid. The capsid is composed of pentamers and hexamers of major capsid protein/MCP, which are linked together by heterotrimers called triplexes. These triplexes are formed by a single molecule of triplex protein 1/TRX1 and two copies of triplex protein 2/TRX2. Additionally, TRX1 is required for efficient transport of TRX2 to the nucleus, which is the site of capsid assembly. This chain is Triplex capsid protein 1, found in Homo sapiens (Human).